We begin with the raw amino-acid sequence, 83 residues long: Small ribosomal subunit protein bS16 (83 aa).

This sequence belongs to the bacterial ribosomal protein bS16 family.

In Verminephrobacter eiseniae (strain EF01-2), this protein is Small ribosomal subunit protein bS16.